A 222-amino-acid chain; its full sequence is MNIFKKKTTPKDALRTSKREMAVATRGIEREITSLQLEEKRLVAEIKKTAKTGNEAATKILARQLVRLRQQITNLQGSRAQIRGVTTHTQALYASTSISSGMKGATKAMVAMNKQMAPTKQAKVIKDFQKQSAQLDMTIEMMSEAIDETLDKDEAEEETEDLTNQVLDEIGVGVASQLSSAPKGRIATKTAAPPASTAATNKNSESSEVDELEKRLASLRRI.

Coiled coils occupy residues 26-83 (RGIE…AQIR) and 143-222 (SEAI…LRRI). Residues 179–222 (SSAPKGRIATKTAAPPASTAATNKNSESSEVDELEKRLASLRRI) form a disordered region. Over residues 187-203 (ATKTAAPPASTAATNKN) the composition is skewed to low complexity.

Belongs to the SNF7 family. Component of the endosomal sorting required for transport complex III (ESCRT-III), composed at least of VPS2, VPS20, VPS24 and VPS32. Interacts with CHMP1A, CHMP1B and VPS60-1.

It localises to the endosome. Its function is as follows. Component of the ESCRT-III complex, which is required for multivesicular bodies (MVBs) formation and sorting of endosomal cargo proteins into MVBs. The ESCRT-III complex is probably involved in the concentration of MVB cargo. This Arabidopsis thaliana (Mouse-ear cress) protein is Vacuolar protein sorting-associated protein 2 homolog 2 (VPS2.2).